The sequence spans 119 residues: Large ribosomal subunit protein bL20 (119 aa).

This sequence belongs to the bacterial ribosomal protein bL20 family.

In terms of biological role, binds directly to 23S ribosomal RNA and is necessary for the in vitro assembly process of the 50S ribosomal subunit. It is not involved in the protein synthesizing functions of that subunit. In Burkholderia ambifaria (strain MC40-6), this protein is Large ribosomal subunit protein bL20.